Here is a 215-residue protein sequence, read N- to C-terminus: 3-demethoxyubiquinol 3-hydroxylase (215 aa).

Glu64, Glu94, His97, Glu146, Glu178, and His181 together coordinate Fe cation.

This sequence belongs to the COQ7 family. It depends on Fe cation as a cofactor.

Its subcellular location is the cell membrane. It catalyses the reaction a 5-methoxy-2-methyl-3-(all-trans-polyprenyl)benzene-1,4-diol + AH2 + O2 = a 3-demethylubiquinol + A + H2O. Its pathway is cofactor biosynthesis; ubiquinone biosynthesis. Its function is as follows. Catalyzes the hydroxylation of 2-nonaprenyl-3-methyl-6-methoxy-1,4-benzoquinol during ubiquinone biosynthesis. This is 3-demethoxyubiquinol 3-hydroxylase from Pseudomonas fluorescens (strain Pf0-1).